A 380-amino-acid chain; its full sequence is Fibromodulin (380 aa).

Residues 1–18 (MRWANILLVAGLCRASLG) form the signal peptide. The LRRNT domain maps to 71–109 (EAQQASSWQCPQECDCPPNFSSAMYCDTRNLRYLPFVPT). An N-linked (GlcNAc...) asparagine glycan is attached at Asn89. 8 LRR repeats span residues 110 to 131 (RMKY…AFDN), 134 to 147 (ELEW…QISS), 160 to 180 (NLER…PLPR), 181 to 202 (SLRE…ALEG), 205 to 227 (NLTA…KGLK), 228 to 248 (SLIL…GLPM), 249 to 270 (ALEQ…YFKV), and 273 to 293 (KLLY…STNT). The N-linked (GlcNAc...) (keratan sulfate) asparagine glycan is linked to Asn131. N-linked (GlcNAc...) (keratan sulfate) asparagine glycosylation is present at Asn170. Asn205 carries N-linked (GlcNAc...) (keratan sulfate) asparagine glycosylation. Asn295 carries an N-linked (GlcNAc...) (keratan sulfate) asparagine glycan. 2 LRR repeats span residues 298–317 (SILE…RVST) and 318–339 (NLEN…SFCT). A disulfide bridge connects residues Cys338 and Cys371. A glycan (N-linked (GlcNAc...) asparagine) is linked at Asn345. The LRR 11 repeat unit spans residues 348 to 371 (RLQVLRLDGNEIKRNAMPPDAPLC).

This sequence belongs to the small leucine-rich proteoglycan (SLRP) family. SLRP class II subfamily. Binds to type I and type II collagen. Post-translationally, binds keratan sulfate chains.

The protein localises to the secreted. It localises to the extracellular space. Its subcellular location is the extracellular matrix. Affects the rate of fibrils formation. May have a primary role in collagen fibrillogenesis. The polypeptide is Fibromodulin (FMOD) (Gallus gallus (Chicken)).